Here is a 392-residue protein sequence, read N- to C-terminus: Heat-inducible transcription repressor HrcA (392 aa).

This sequence belongs to the HrcA family.

In terms of biological role, negative regulator of class I heat shock genes (grpE-dnaK-dnaJ and groELS operons). Prevents heat-shock induction of these operons. The chain is Heat-inducible transcription repressor HrcA from Chlamydia trachomatis serovar L2 (strain ATCC VR-902B / DSM 19102 / 434/Bu).